The following is a 151-amino-acid chain: UPAR/Ly6 domain-containing protein crok (151 aa).

The first 23 residues, 1–23, serve as a signal peptide directing secretion; that stretch reads MKTLEKYILFAIVLCCLLQLGQA. The Lumenal portion of the chain corresponds to 24-128; sequence IKCWDCRSDN…KDGCNSAGIH (105 aa). Intrachain disulfides connect Cys-26/Cys-68, Cys-29/Cys-37, Cys-51/Cys-85, Cys-100/Cys-114, and Cys-116/Cys-122. N-linked (GlcNAc...) asparagine glycosylation is present at Asn-43. Ser-124 carries GPI-anchor amidated serine lipidation. A propeptide spans 125–151 (removed in mature form); sequence AGIHRLGLMGVLTGTLLSVIVAHLLRQ. The helical transmembrane segment at 129–149 threads the bilayer; the sequence is RLGLMGVLTGTLLSVIVAHLL. Residues 150 to 151 are Cytoplasmic-facing; sequence RQ.

Belongs to the quiver family.

The protein resides in the vesicle. It is found in the membrane. The protein localises to the endomembrane system. Its function is as follows. Required for septate junction assembly, possibly by organizing the preassembly and transport of septate junction proteins including dlg1/disks large 1 and Nrx-IV/Neurexin-IV. Involved in paracellular barrier functions of trachea, hindgut and salivary gland mediated by epithelial cell septate junctions. The chain is UPAR/Ly6 domain-containing protein crok from Drosophila melanogaster (Fruit fly).